Here is a 492-residue protein sequence, read N- to C-terminus: Lipopolysaccharide biosynthesis protein WzxC (492 aa).

The Cytoplasmic segment spans residues 1–12; it reads MSLREKTISGAK. A helical membrane pass occupies residues 13-33; sequence WSAIATVIIIGLGLVQMTVLA. At 34–42 the chain is on the periplasmic side; it reads RIIDNHQFG. A helical membrane pass occupies residues 43 to 63; the sequence is LLTVSLVIIALADTLSDFGIA. The Cytoplasmic segment spans residues 64-81; the sequence is NSIIQRKEISHLELTTLY. A helical membrane pass occupies residues 82–102; that stretch reads WLNVGLGIVVCVAVFLLSDLI. Topologically, residues 103–104 are periplasmic; that stretch reads GD. A helical transmembrane segment spans residues 105-125; the sequence is VLNNPDLAPLIKTLSLAFVVI. Topologically, residues 126 to 157 are cytoplasmic; it reads PHGQQFRALMQKELEFNKIGMIETSAVLAGFT. Residues 158–178 traverse the membrane as a helical segment; that stretch reads CTVVSAHFWPLAMTAILGYLV. Topologically, residues 179–236 are periplasmic; the sequence is NSAVRTLLFGYFGRKIYRPGLHFSLASVAPNLRFGAWLTADSIINYLNTNLSTLVLAR. A helical transmembrane segment spans residues 237 to 257; the sequence is ILGAGVAGGYNLAYNVAVVPP. At 258–288 the chain is on the cytoplasmic side; it reads MKLNPIITRVLFPAFAKIQDDTEKLRVNFYK. Residues 289–309 form a helical membrane-spanning segment; it reads LLSVVGIINFPALLGLMVVSN. Over 310–322 the chain is Periplasmic; sequence NFVPLVFGEKWNS. The chain crosses the membrane as a helical span at residues 323–343; the sequence is IIPVLQLLCVVGLLRSVGNPI. At 344–364 the chain is on the cytoplasmic side; it reads GSLLMAKARVDISFKFNVFKT. Residues 365–385 traverse the membrane as a helical segment; that stretch reads FLFIPAIVIGGQMAGAIGVTL. Position 386 (Gly-386) is a topological domain, periplasmic. A helical transmembrane segment spans residues 387–407; that stretch reads FLLVQIINTILSYFVMIKPVL. Residues 408–417 lie on the Cytoplasmic side of the membrane; it reads GSSYRQYILS. Residues 418–438 traverse the membrane as a helical segment; it reads LWLPFYLSLPTLVVSYALGIV. Over 439–445 the chain is Periplasmic; the sequence is LKGQLAL. Residues 446–466 traverse the membrane as a helical segment; it reads GMLLAVQIATGVLAFVVMIVL. Over 467-492 the chain is Cytoplasmic; it reads SRHPLVVEVKRQFCRSEKMKMLLRAG.

The protein belongs to the polysaccharide synthase family.

The protein localises to the cell inner membrane. It participates in bacterial outer membrane biogenesis; lipopolysaccharide biosynthesis. This chain is Lipopolysaccharide biosynthesis protein WzxC (wzxC), found in Escherichia coli (strain K12).